The sequence spans 55 residues: U-reduvitoxin-Pr2a (55 aa).

Positions 1–21 (MMKFLLVLFLITITLITMAYS) are cleaved as a signal peptide. 3 disulfides stabilise this stretch: C26-C41, C33-C46, and C40-C51.

This sequence belongs to the venom Ptu1-like knottin family. Expressed by the venom gland (posterior main gland) (at protein level).

Its subcellular location is the secreted. Binds reversibly and blocks P/Q-type voltage-gated calcium channels (Cav). In Platymeris rhadamanthus (Red spot assassin bug), this protein is U-reduvitoxin-Pr2a.